A 155-amino-acid chain; its full sequence is Small ribosomal subunit protein uS7cz/uS7cy (155 aa).

It belongs to the universal ribosomal protein uS7 family. Part of the 30S ribosomal subunit.

It localises to the plastid. The protein resides in the chloroplast. Functionally, one of the primary rRNA binding proteins, it binds directly to 16S rRNA where it nucleates assembly of the head domain of the 30S subunit. In Vitis vinifera (Grape), this protein is Small ribosomal subunit protein uS7cz/uS7cy (rps7-A).